The primary structure comprises 247 residues: Centromere protein H (247 aa).

Methionine 1 carries the N-acetylmethionine modification. Positions 1-14 (MEEQPQMQDADEPA) are enriched in acidic residues. Residues 1-34 (MEEQPQMQDADEPADSGGEGRAGGPPQVAGAQAA) are disordered. Serine 16 bears the Phosphoserine mark. Residues 24 to 34 (GPPQVAGAQAA) are compositionally biased toward low complexity. Positions 47–192 (RAQTKQQLLE…KIDLDSMENS (146 aa)) form a coiled coil. Lysine 67 participates in a covalent cross-link: Glycyl lysine isopeptide (Lys-Gly) (interchain with G-Cter in SUMO2). Threonine 68 carries the phosphothreonine modification.

It belongs to the CENP-H/MCM16 family. In terms of assembly, self-associates. Component of the CENPA-NAC complex, at least composed of CENPA, CENPC, CENPH, CENPM, CENPN, CENPT and CENPU. The CENPA-NAC complex interacts with the CENPA-CAD complex, composed of CENPI, CENPK, CENPL, CENPO, CENPP, CENPQ, CENPR and CENPS. Interacts directly with CENPK. Interacts with KIF2C and NDC80. Interacts with TRIM36.

The protein resides in the nucleus. It is found in the chromosome. It localises to the centromere. Its subcellular location is the kinetochore. Its function is as follows. Component of the CENPA-NAC (nucleosome-associated) complex, a complex that plays a central role in assembly of kinetochore proteins, mitotic progression and chromosome segregation. The CENPA-NAC complex recruits the CENPA-CAD (nucleosome distal) complex and may be involved in incorporation of newly synthesized CENPA into centromeres. Required for chromosome congression and efficiently align the chromosomes on a metaphase plate. In Homo sapiens (Human), this protein is Centromere protein H.